The primary structure comprises 203 residues: Acid phosphatase (203 aa).

The active-site Tele-phosphohistidine intermediate is the H13. E85 acts as the Proton donor/acceptor in catalysis.

Belongs to the phosphoglycerate mutase family. Homodimer.

It catalyses the reaction a phosphate monoester + H2O = an alcohol + phosphate. The catalysed reaction is beta-D-fructose 1,6-bisphosphate + H2O = beta-D-fructose 6-phosphate + phosphate. It participates in carbohydrate biosynthesis; gluconeogenesis. In contrast to classical FBPases, is resistant to inhibition by lithium. Its function is as follows. Phosphatase with a broad specificity. Can dephosphorylate a variety of substrates including phosphorylated sugars like fructose-6-phosphate (F6P). Is able to function in vivo as a fructose-1,6-bisphosphatase (FBPase) and to maintain gluconeogenesis when the classical FBPase GlpX is absent. Shows negligible phosphoglycerate mutase activity. Has no phosphatase activity against 3-phosphoglycerate, 2,3-bisphosphoglycerate, or hydrophobic substrates such as alpha-napthyl phosphate. The polypeptide is Acid phosphatase (Mycobacterium tuberculosis (strain ATCC 25618 / H37Rv)).